The primary structure comprises 791 residues: Solute carrier family 26 member 9 (791 aa).

The Cytoplasmic segment spans residues 1 to 70 (MSQPRPRYVV…WLPKYKIKDY (70 aa)). A helical transmembrane segment spans residues 71–96 (IIPDLLGGLSGGSIQVPQGMAFALLA). Topologically, residues 97–99 (NLP) are extracellular. A helical membrane pass occupies residues 100–117 (AVNGLYSSFFPLLTYFFL). The Cytoplasmic portion of the chain corresponds to 118 to 128 (GGVHQMVPGTF). Residues 129–142 (AVISILVGNICLQL) form a helical membrane-spanning segment. Residues 143–171 (APESKFQVFNNATNESYVDTAAMEAERLH) lie on the Extracellular side of the membrane. Residues 172 to 190 (VSATLACLTAIIQMGLGFM) form a helical membrane-spanning segment. Residues 191 to 202 (QFGFVAIYLSES) are Cytoplasmic-facing. Residues 203–224 (FIRGFMTAAGLQILISVLKYIF) form a helical membrane-spanning segment. The Extracellular portion of the chain corresponds to 225 to 235 (GLTIPSYTGPG). The helical intramembrane region spans 236-244 (SIVFTFIDI). Residues 245 to 254 (CKNLPHTNIA) lie on the Extracellular side of the membrane. A helical membrane pass occupies residues 255 to 273 (SLIFALISGAFLVLVKELN). Residues 274–281 (ARYMHKIR) are Cytoplasmic-facing. A helical membrane pass occupies residues 282–297 (FPIPTEMIVVVVATAI). The Extracellular segment spans residues 298 to 327 (SGGCKMPKKYHMQIVGEIQRGFPTPVSPVV). A helical transmembrane segment spans residues 328–348 (SQWKDMIGTAFSLAIVSYVIN). The Cytoplasmic portion of the chain corresponds to 349–366 (LAMGRTLANKHGYDVDSN). The helical transmembrane segment at 367–382 (QEMIALGCSNFFGSFF) threads the bilayer. The Extracellular portion of the chain corresponds to 383–390 (KIHVICCA). A helical membrane pass occupies residues 391 to 400 (LSVTLAVDGA). The Cytoplasmic segment spans residues 401 to 404 (GGKS). Residues 405–423 (QVASLCVSLVVMITMLVLG) traverse the membrane as a helical segment. The Extracellular portion of the chain corresponds to 424–428 (IYLYP). A helical transmembrane segment spans residues 429–450 (LPKSVLGALIAVNLKNSLKQLT). Topologically, residues 451 to 464 (DPYYLWRKSKLDCC) are cytoplasmic. Residues 465–476 (IWVVSFLSSFFL) form a helical membrane-spanning segment. A topological domain (extracellular) is located at residue serine 477. Residues 478-489 (LPYGVAVGVAFS) traverse the membrane as a helical segment. The Cytoplasmic portion of the chain corresponds to 490-791 (VLVVVFQTQF…MFHAETLTAL (302 aa)). One can recognise an STAS domain in the interval 519–737 (TYNRAQDIQG…PSIHDAVLFA (219 aa)). The disordered stretch occupies residues 602–650 (FENAPPTDPNNNQTPANGTSVSYITFSPDSSSPAQSEPPASAEAPGEPS). Positions 610–626 (PNNNQTPANGTSVSYIT) are enriched in polar residues. The span at 628–650 (SPDSSSPAQSEPPASAEAPGEPS) shows a compositional bias: low complexity.

Belongs to the SLC26A/SulP transporter (TC 2.A.53) family. Homodimer. Predominantly expressed in lung at the luminal side of the bronchiolar and alveolar epithelium of lung. To a lower extent, also expressed in pancreas and prostate.

Its subcellular location is the cell membrane. It localises to the endomembrane system. The catalysed reaction is chloride(in) = chloride(out). It carries out the reaction hydrogencarbonate(in) + chloride(out) = hydrogencarbonate(out) + chloride(in). With respect to regulation, inhibited by ammonium and thiosulfate. In terms of biological role, ion transporter that can act both as an ion channel and anion exchanger. Mainly acts as a chloride channel, which mediate uncoupled chloride anion transport in an alternate-access mechanism where a saturable binding site is alternately exposed to either one or the other side of the membrane. Also acts as a DIDS- and thiosulfate- sensitive anion exchanger the exchange of chloride for bicarbonate ions across the cell membrane. This is Solute carrier family 26 member 9 from Homo sapiens (Human).